The primary structure comprises 434 residues: Histidine--tRNA ligase (434 aa).

The disordered stretch occupies residues 412-434; the sequence is DQTTVPVEAFPGDHDAPTYEDVV.

This sequence belongs to the class-II aminoacyl-tRNA synthetase family.

It localises to the cytoplasm. It catalyses the reaction tRNA(His) + L-histidine + ATP = L-histidyl-tRNA(His) + AMP + diphosphate + H(+). This chain is Histidine--tRNA ligase, found in Haloquadratum walsbyi (strain DSM 16790 / HBSQ001).